The sequence spans 432 residues: 3-phosphoshikimate 1-carboxyvinyltransferase (432 aa).

Residues lysine 22, serine 23, and arginine 27 each contribute to the 3-phosphoshikimate site. Residue lysine 22 participates in phosphoenolpyruvate binding. Phosphoenolpyruvate contacts are provided by glycine 96 and arginine 127. The 3-phosphoshikimate site is built by serine 173, serine 174, glutamine 175, serine 201, aspartate 317, asparagine 340, and lysine 344. Position 175 (glutamine 175) interacts with phosphoenolpyruvate. Catalysis depends on aspartate 317, which acts as the Proton acceptor. Positions 348, 392, and 417 each coordinate phosphoenolpyruvate.

Belongs to the EPSP synthase family. As to quaternary structure, monomer.

The protein localises to the cytoplasm. The catalysed reaction is 3-phosphoshikimate + phosphoenolpyruvate = 5-O-(1-carboxyvinyl)-3-phosphoshikimate + phosphate. The protein operates within metabolic intermediate biosynthesis; chorismate biosynthesis; chorismate from D-erythrose 4-phosphate and phosphoenolpyruvate: step 6/7. Catalyzes the transfer of the enolpyruvyl moiety of phosphoenolpyruvate (PEP) to the 5-hydroxyl of shikimate-3-phosphate (S3P) to produce enolpyruvyl shikimate-3-phosphate and inorganic phosphate. This chain is 3-phosphoshikimate 1-carboxyvinyltransferase, found in Mannheimia haemolytica (Pasteurella haemolytica).